The chain runs to 250 residues: 5-oxoprolinase subunit A (250 aa).

This sequence belongs to the LamB/PxpA family. Forms a complex composed of PxpA, PxpB and PxpC.

The enzyme catalyses 5-oxo-L-proline + ATP + 2 H2O = L-glutamate + ADP + phosphate + H(+). Its function is as follows. Catalyzes the cleavage of 5-oxoproline to form L-glutamate coupled to the hydrolysis of ATP to ADP and inorganic phosphate. This Thermus thermophilus (strain ATCC BAA-163 / DSM 7039 / HB27) protein is 5-oxoprolinase subunit A.